We begin with the raw amino-acid sequence, 97 residues long: Protein E7 (97 aa).

Residues 1-40 (MIGKQATLRDIVLEELVQPIDLHCHEELTEEVEEAVVEEE) form an E7 terminal domain region. Residues 22-26 (LHCHE) carry the LXCXE motif; interaction with host RB1 and TMEM173/STING motif. Residues 52–88 (CGGCETQLKLYVLATDFGIRSFQASLLENVKLVCPAC) fold into a zinc finger. The Nuclear export signal motif lies at 70–78 (IRSFQASLL).

Belongs to the papillomaviridae E7 protein family. Homodimer. Homooligomer. Interacts with host RB1; this interaction induces dissociation of RB1-E2F1 complex thereby disrupting RB1 activity. Interacts with host EP300; this interaction represses EP300 transcriptional activity. Interacts with protein E2; this interaction inhibits E7 oncogenic activity. Interacts with host TMEM173/STING; this interaction impairs the ability of TMEM173/STING to sense cytosolic DNA and promote the production of type I interferon (IFN-alpha and IFN-beta). Highly phosphorylated.

It is found in the host cytoplasm. The protein resides in the host nucleus. Functionally, plays a role in viral genome replication by driving entry of quiescent cells into the cell cycle. Stimulation of progression from G1 to S phase allows the virus to efficiently use the cellular DNA replicating machinery to achieve viral genome replication. E7 protein has both transforming and trans-activating activities. Induces the disassembly of the E2F1 transcription factor from RB1, with subsequent transcriptional activation of E2F1-regulated S-phase genes. Interferes with host histone deacetylation mediated by HDAC1 and HDAC2, leading to transcription activation. Also plays a role in the inhibition of both antiviral and antiproliferative functions of host interferon alpha. Interaction with host TMEM173/STING impairs the ability of TMEM173/STING to sense cytosolic DNA and promote the production of type I interferon (IFN-alpha and IFN-beta). This Human papillomavirus 23 protein is Protein E7.